The following is a 176-amino-acid chain: RNA pyrophosphohydrolase (176 aa).

Residues 6-149 form the Nudix hydrolase domain; sequence GYRPNVGIVI…KRDVYRRVMK (144 aa). The Nudix box signature appears at 38–59; the sequence is GGINPGESAEQAMYRELFEEVG.

Belongs to the Nudix hydrolase family. RppH subfamily. It depends on a divalent metal cation as a cofactor.

In terms of biological role, accelerates the degradation of transcripts by removing pyrophosphate from the 5'-end of triphosphorylated RNA, leading to a more labile monophosphorylated state that can stimulate subsequent ribonuclease cleavage. This Klebsiella pneumoniae (strain 342) protein is RNA pyrophosphohydrolase.